Consider the following 220-residue polypeptide: Glutathione S-transferase-like protein FUS3 (220 aa).

Residues 3-84 (SFGTLYTYMP…YVAQSGPQAS (82 aa)) form the GST N-terminal domain. The 131-residue stretch at 90–220 (DAMSSAKIRQ…LIEKRRIGAK (131 aa)) folds into the GST C-terminal domain.

Belongs to the GST superfamily.

Functionally, glutathione S-transferase-like protein; part of the gene cluster that mediates the biosynthesis of the mycotoxin fusarin C. Within the cluster, FUS1, FUS2, FUS8 and FUS9 are sufficient for fusarin production. The other FUS cluster members are not essential for fusarin C biosynthesis. The sequence is that of Glutathione S-transferase-like protein FUS3 from Gibberella moniliformis (strain M3125 / FGSC 7600) (Maize ear and stalk rot fungus).